Reading from the N-terminus, the 483-residue chain is Phloretin 2'-O-glucosyltransferase (483 aa).

The active-site Proton acceptor is the histidine 15. Histidine 15 provides a ligand contact to an anthocyanidin. The active-site Charge relay is aspartate 118. The UDP-alpha-D-glucose site is built by threonine 140, alanine 360, glutamine 362, histidine 377, tryptophan 380, asparagine 381, serine 382, and glutamate 385. Residue alanine 400 coordinates an anthocyanidin. 2 residues coordinate UDP-alpha-D-glucose: glutamate 401 and glutamine 402.

This sequence belongs to the UDP-glycosyltransferase family.

The enzyme catalyses phloretin + UDP-alpha-D-glucose = phlorizin + UDP + H(+). Functionally, glycosyltransferase that possesses phloretin 2'-O-glycosyltransferase activity. Converts phloretin to phlorizin (phloretin 2'-O-glucoside), a potent antioxidant. Is specific for phloretin and does not possess glycosyltransferase activity toward caffeic acid, catechin, chlorogenic acid, 2-coumaric acid, 3-coumaric acid, 4-coumaric acid, cyanidin, 3,4-dihydroxyhydrocinnamic acid, epicatechin, 3-hydroxybenzoic acid, naringenin, 3,4-dihydroxybenzoic acid, quercetin and rutin. Can glycosylate phloretin in the presence of UDP-glucose, UDP-xylose and UDP-galactose. In Malus domestica (Apple), this protein is Phloretin 2'-O-glucosyltransferase.